The following is a 329-amino-acid chain: Tryptophan--tRNA ligase (329 aa).

ATP is bound by residues glutamine 9–serine 11 and glycine 17–asparagine 18. Residues proline 10 to asparagine 18 carry the 'HIGH' region motif. Residue aspartate 133 participates in L-tryptophan binding. ATP is bound by residues glycine 145–aspartate 147, valine 184, and lysine 193–serine 197. The short motif at lysine 193–serine 197 is the 'KMSKS' region element.

This sequence belongs to the class-I aminoacyl-tRNA synthetase family. As to quaternary structure, homodimer.

It localises to the cytoplasm. It carries out the reaction tRNA(Trp) + L-tryptophan + ATP = L-tryptophyl-tRNA(Trp) + AMP + diphosphate + H(+). Catalyzes the attachment of tryptophan to tRNA(Trp). The protein is Tryptophan--tRNA ligase of Staphylococcus aureus (strain MSSA476).